The chain runs to 509 residues: Tyrosine-protein kinase Lck (509 aa).

Gly2 carries N-myristoyl glycine lipidation. Residues 2 to 72 (GCGCSSHPED…DNLVIALHSY (71 aa)) form an interactions with CD4 and CD8 region. Residues Cys3 and Cys5 are each lipidated (S-palmitoyl cysteine). An SH3 domain is found at 61–121 (LQDNLVIALH…PFNFVAKANS (61 aa)). Lys99 is covalently cross-linked (Glycyl lysine isopeptide (Lys-Gly) (interchain with G-Cter in ubiquitin)). Ser102 carries the post-translational modification Phosphoserine. Residues 127–224 (WFFKNLSRKD…GLCTRLSRPC (98 aa)) enclose the SH2 domain. Residues 154 to 242 (RESESTAGSF…WWEDEWEVPR (89 aa)) are interaction with PTPRH. The residue at position 159 (Thr159) is a Phosphothreonine. Ser162 carries the phosphoserine modification. Tyr192 bears the Phosphotyrosine mark. The residue at position 194 (Ser194) is a Phosphoserine. A Protein kinase domain is found at 245-498 (LKLVERLGAG…YLRSVLEDFF (254 aa)). Residues 251 to 259 (LGAGQFGEV) and Lys273 each bind ATP. Residue Lys276 forms a Glycyl lysine isopeptide (Lys-Gly) (interchain with G-Cter in ubiquitin) linkage. The active-site Proton acceptor is the Asp364. Tyr394 carries the post-translational modification Phosphotyrosine; by autocatalysis. The residue at position 505 (Tyr505) is a Phosphotyrosine; by CSK.

This sequence belongs to the protein kinase superfamily. Tyr protein kinase family. SRC subfamily. Binds to the cytoplasmic domain of cell surface receptors, such as AXL, CD2, CD4, CD5, CD8, CD44, CD45 and CD122. Also binds to effector molecules, such as PI4K, VAV1, RASA1, FYB1 and to other protein kinases including CDK1, RAF1, ZAP70 and SYK. Binds to phosphatidylinositol 3'-kinase (PI3K) from T-lymphocytes through its SH3 domain and to the tyrosine phosphorylated form of KHDRBS1/p70 through its SH2 domain. Interacts with SQSTM1. Interacts with phosphorylated LIME1. LIME1. Interacts with CBLB and PTPRH. Interacts with RUNX3. Forms a signaling complex with EPHA1, PTK2B and PI3-KINASE; upon activation by EFNA1 which may regulate T-lymphocytes migration. Associates with ZAP70 and RHOH; these interactions allow LCK-mediated RHOH and CD3 subunit phosphorylation in the presence of functional ZAP70. Interacts with CEACAM1 (via cytoplasmic domain); mediates CEACAM1 phosphorylation resulting in PTPN6 recruitment that dephosphorylates TCR stimulation-induced CD247 and ZAP70. Interacts with CD160. Interacts with CD48. Autophosphorylated on Tyr-394, increasing enzymatic activity, this site is dephosphorylated by PTN22. Phosphorylated on Tyr-505 by CSK, decreasing activity. Dephosphorylated by PTPRC/CD45. Dephosphorylation at Tyr-394 by PTPN2 negatively regulates T-cells differentiation. Dephosphorylation at Tyr-394 by DUSP22 negatively regulates T-cell receptor signaling. In terms of processing, myristoylation is required prior to palmitoylation. Post-translationally, palmitoylation regulates association with the plasma membrane and could be mediated by ZDHHC2. 'Lys-63'-linked ubiquitinated at Lys-99 and Lys-276 by UBR2; this modification is required for autophosphorylation at Tyr-394.

The protein localises to the cell membrane. The protein resides in the cytoplasm. It is found in the cytosol. It carries out the reaction L-tyrosyl-[protein] + ATP = O-phospho-L-tyrosyl-[protein] + ADP + H(+). With respect to regulation, the relative activities of the inhibitory tyrosine-protein kinase CSK and the activating tyrosine-protein phosphatase PTPRC/CD45 determine the level of LCK activity. These interactions allow rapid and efficient activation of LCK in response to TCR stimulation. Non-receptor tyrosine-protein kinase that plays an essential role in the selection and maturation of developing T-cells in the thymus and in the function of mature T-cells. Plays a key role in T-cell antigen receptor (TCR)-linked signal transduction pathways. Constitutively associated with the cytoplasmic portions of the CD4 and CD8 surface receptors. Association of the TCR with a peptide antigen-bound MHC complex facilitates the interaction of CD4 and CD8 with MHC class II and class I molecules, respectively, thereby recruiting the associated LCK protein to the vicinity of the TCR/CD3 complex. LCK then phosphorylates tyrosine residues within the immunoreceptor tyrosine-based activation motifs (ITAM) of the cytoplasmic tails of the TCR-gamma chains and CD3 subunits, initiating the TCR/CD3 signaling pathway. Once stimulated, the TCR recruits the tyrosine kinase ZAP70, that becomes phosphorylated and activated by LCK. Following this, a large number of signaling molecules are recruited, ultimately leading to lymphokine production. LCK also contributes to signaling by other receptor molecules. Associates directly with the cytoplasmic tail of CD2, which leads to hyperphosphorylation and activation of LCK. Also plays a role in the IL2 receptor-linked signaling pathway that controls the T-cell proliferative response. Binding of IL2 to its receptor results in increased activity of LCK. Is expressed at all stages of thymocyte development and is required for the regulation of maturation events that are governed by both pre-TCR and mature alpha beta TCR. Phosphorylates other substrates including RUNX3, PTK2B/PYK2, the microtubule-associated protein MAPT, RHOH or TYROBP. Interacts with UNC119; this interaction plays a crucial role in activation of LCK. The sequence is that of Tyrosine-protein kinase Lck (LCK) from Aotus nancymaae (Ma's night monkey).